Consider the following 571-residue polypeptide: Proline--tRNA ligase (571 aa).

This sequence belongs to the class-II aminoacyl-tRNA synthetase family. ProS type 1 subfamily. As to quaternary structure, homodimer.

Its subcellular location is the cytoplasm. It catalyses the reaction tRNA(Pro) + L-proline + ATP = L-prolyl-tRNA(Pro) + AMP + diphosphate. Functionally, catalyzes the attachment of proline to tRNA(Pro) in a two-step reaction: proline is first activated by ATP to form Pro-AMP and then transferred to the acceptor end of tRNA(Pro). As ProRS can inadvertently accommodate and process non-cognate amino acids such as alanine and cysteine, to avoid such errors it has two additional distinct editing activities against alanine. One activity is designated as 'pretransfer' editing and involves the tRNA(Pro)-independent hydrolysis of activated Ala-AMP. The other activity is designated 'posttransfer' editing and involves deacylation of mischarged Ala-tRNA(Pro). The misacylated Cys-tRNA(Pro) is not edited by ProRS. The protein is Proline--tRNA ligase of Proteus mirabilis (strain HI4320).